A 245-amino-acid chain; its full sequence is Dehydrogenase/reductase SDR family member 6 (245 aa).

Residues 16–18 (QGI), Asp37, and Asp58 contribute to the NAD(+) site. Arg144 contacts substrate. Tyr147 (proton acceptor) is an active-site residue. NAD(+) contacts are provided by residues Lys151 and 180–184 (VDTPS). Residues Arg188 and Arg205 each contribute to the substrate site.

It belongs to the short-chain dehydrogenases/reductases (SDR) family. Homotetramer. As to expression, detected in liver, spleen and macrophages. Widely expressed.

The protein localises to the cytoplasm. It catalyses the reaction cis-4-hydroxy-L-proline + NAD(+) = 4-oxo-L-proline + NADH + H(+). The enzyme catalyses (R)-3-hydroxybutanoate + NAD(+) = acetoacetate + NADH + H(+). Its pathway is amino-acid metabolism. It participates in siderophore biosynthesis. Functionally, NAD(H)-dependent dehydrogenase/reductase with a preference for cyclic substrates. Catalyzes stereoselective conversion of 4-oxo-L-proline to cis-4-hydroxy-L-proline, likely a detoxification mechanism for ketoprolines. Mediates the formation of 2,5-dihydroxybenzoate (2,5-DHBA), a siderophore that chelates free cytoplasmic iron and associates with LCN2, thereby regulating iron transport and homeostasis while protecting cells against free radical-induced oxidative stress. The iron-siderophore complex is imported into mitochondria, providing an iron source for mitochondrial metabolic processes in particular heme synthesis. May act as a 3-hydroxybutyrate dehydrogenase. (Microbial infection) May play a role in susceptibility to bacterial infection by providing an assimilable source of iron that is exploited by pathogenic bacteria. Host iron-siderophore complexes can be used by bacteria to promote their own growth and pathogenicity. This Mus musculus (Mouse) protein is Dehydrogenase/reductase SDR family member 6.